A 407-amino-acid chain; its full sequence is Tryptophan synthase beta chain (407 aa).

Lys-91 carries the post-translational modification N6-(pyridoxal phosphate)lysine.

The protein belongs to the TrpB family. In terms of assembly, tetramer of two alpha and two beta chains. Requires pyridoxal 5'-phosphate as cofactor.

It carries out the reaction (1S,2R)-1-C-(indol-3-yl)glycerol 3-phosphate + L-serine = D-glyceraldehyde 3-phosphate + L-tryptophan + H2O. It functions in the pathway amino-acid biosynthesis; L-tryptophan biosynthesis; L-tryptophan from chorismate: step 5/5. Its function is as follows. The beta subunit is responsible for the synthesis of L-tryptophan from indole and L-serine. The polypeptide is Tryptophan synthase beta chain (Streptococcus pneumoniae (strain 70585)).